Here is a 275-residue protein sequence, read N- to C-terminus: MTELQQIIEAAFERRDSITPGSVDAATKSAILQTIDLLDAGKARVAEKIAGEWVVHQWLKKAVLLYFRINDNGIIKGDDAQYYDKVPLKFSDYTAEQFKEAGVRVVPPATARKGSFIAPNTVLMPSYVNIGAFVDEGTMVDTWATVGSCAQIGKNVHLSGGVGIGGVLEPLQANPTIIEDNCFIGARSEVVEGVIVEEGSVISMGVFIGQSTRIYDRETGEIHYGRVPAGSVVVSGSLPSKCGKYSLYAAVIVKKVDAKTRAKVGINALLRSIDE.

Arginine 104 and aspartate 141 together coordinate substrate.

This sequence belongs to the transferase hexapeptide repeat family. In terms of assembly, homotrimer.

It is found in the cytoplasm. It carries out the reaction (S)-2,3,4,5-tetrahydrodipicolinate + succinyl-CoA + H2O = (S)-2-succinylamino-6-oxoheptanedioate + CoA. Its pathway is amino-acid biosynthesis; L-lysine biosynthesis via DAP pathway; LL-2,6-diaminopimelate from (S)-tetrahydrodipicolinate (succinylase route): step 1/3. In Aeromonas salmonicida (strain A449), this protein is 2,3,4,5-tetrahydropyridine-2,6-dicarboxylate N-succinyltransferase.